Reading from the N-terminus, the 484-residue chain is Dual specificity protein kinase CLK1 (484 aa).

The segment at 1-42 is disordered; sequence MRHSKRTYCPDWDDKDWDYGKWRSSSSHKRRKRSHSSAQENK. Positions 26-35 are enriched in basic residues; it reads SSHKRRKRSH. A Phosphoserine modification is found at Ser61. Residues 79–146 form a disordered region; the sequence is DYTQGCEPGH…RTRSVEDDEE (68 aa). A compositionally biased stretch (basic and acidic residues) spans 86–97; the sequence is PGHRQRDHESRY. Over residues 100-112 the composition is skewed to low complexity; the sequence is HSSKSSGRSGRSS. Over residues 113-138 the composition is skewed to basic residues; sequence YKSKHRIHHSTSHRRSHGKSHRRKRT. Thr138 carries the post-translational modification Phosphothreonine. The residue at position 140 (Ser140) is a Phosphoserine. The 317-residue stretch at 161-477 folds into the Protein kinase domain; it reads YEIVDTLGEG…LREALKHPFF (317 aa). ATP is bound by residues 167 to 175 and Lys191; that span reads LGEGAFGKV. Residue Asp288 is the Proton acceptor of the active site.

This sequence belongs to the protein kinase superfamily. CMGC Ser/Thr protein kinase family. Lammer subfamily. As to quaternary structure, interacts with PPIG and UBL5. Post-translationally, autophosphorylates on all three types of residues. As to expression, endothelial cells.

It is found in the nucleus. It catalyses the reaction L-seryl-[protein] + ATP = O-phospho-L-seryl-[protein] + ADP + H(+). The catalysed reaction is L-threonyl-[protein] + ATP = O-phospho-L-threonyl-[protein] + ADP + H(+). The enzyme catalyses L-tyrosyl-[protein] + ATP = O-phospho-L-tyrosyl-[protein] + ADP + H(+). With respect to regulation, regulates splicing of its own pre-mRNA according to its kinase activity; increased expression of the catalytically active form influences splicing to generate the catalytically inactive splicing variant lacking the kinase domain. Leucettine L41 inhibits its kinase activity and affects the regulation of alternative splicing mediated by phosphorylation of SR proteins. In terms of biological role, dual specificity kinase acting on both serine/threonine and tyrosine-containing substrates. Phosphorylates serine- and arginine-rich (SR) proteins of the spliceosomal complex and may be a constituent of a network of regulatory mechanisms that enable SR proteins to control RNA splicing. Phosphorylates: SRSF1, SRSF3 and PTPN1. Regulates the alternative splicing of tissue factor (F3) pre-mRNA in endothelial cells. In Homo sapiens (Human), this protein is Dual specificity protein kinase CLK1.